The primary structure comprises 366 residues: UPF0324 membrane protein RSc1111 (366 aa).

The next 8 helical transmembrane spans lie at 21 to 43 (LAGA…TAWA), 103 to 125 (LGAS…GAWV), 137 to 159 (AVLV…APAV), 169 to 191 (AIAS…YALA), 198 to 220 (VAPA…VIAA), 240 to 262 (VLAL…LVLE), 283 to 305 (WFAA…ATWH), and 343 to 365 (AGVL…RWLA).

This sequence belongs to the UPF0324 family.

The protein resides in the cell membrane. This is UPF0324 membrane protein RSc1111 from Ralstonia nicotianae (strain ATCC BAA-1114 / GMI1000) (Ralstonia solanacearum).